The following is a 299-amino-acid chain: Probable xyloglucan endotransglucosylase/hydrolase protein 10 (299 aa).

Residues 1-29 (MTLINRSKPFVLLVGFSIISSLLLWVSQA) form the signal peptide. In terms of domain architecture, GH16 spans 30-225 (SVVSSGDFNK…WSKGPFVASF (196 aa)). Residue Asn51 is glycosylated (N-linked (GlcNAc...) asparagine). The Nucleophile role is filled by Glu111. Catalysis depends on Glu115, which acts as the Proton donor. Xyloglucan-binding positions include Glu115, 128-130 (QTN), 138-140 (NRE), 204-205 (SW), and Gly209. Cystine bridges form between Cys233/Cys242 and Cys280/Cys294. Asn238 carries N-linked (GlcNAc...) asparagine glycosylation. Position 285 (Arg285) interacts with xyloglucan.

It belongs to the glycosyl hydrolase 16 family. XTH group 1 subfamily. In terms of processing, contains at least one intrachain disulfide bond essential for its enzymatic activity.

Its subcellular location is the secreted. The protein localises to the cell wall. The protein resides in the extracellular space. It localises to the apoplast. The catalysed reaction is breaks a beta-(1-&gt;4) bond in the backbone of a xyloglucan and transfers the xyloglucanyl segment on to O-4 of the non-reducing terminal glucose residue of an acceptor, which can be a xyloglucan or an oligosaccharide of xyloglucan.. In terms of biological role, catalyzes xyloglucan endohydrolysis (XEH) and/or endotransglycosylation (XET). Cleaves and religates xyloglucan polymers, an essential constituent of the primary cell wall, and thereby participates in cell wall construction of growing tissues. This chain is Probable xyloglucan endotransglucosylase/hydrolase protein 10 (XTH10), found in Arabidopsis thaliana (Mouse-ear cress).